The following is a 554-amino-acid chain: DNA mismatch repair protein MutL (554 aa).

This sequence belongs to the DNA mismatch repair MutL/HexB family.

In terms of biological role, this protein is involved in the repair of mismatches in DNA. It is required for dam-dependent methyl-directed DNA mismatch repair. May act as a 'molecular matchmaker', a protein that promotes the formation of a stable complex between two or more DNA-binding proteins in an ATP-dependent manner without itself being part of a final effector complex. The chain is DNA mismatch repair protein MutL from Crocosphaera subtropica (strain ATCC 51142 / BH68) (Cyanothece sp. (strain ATCC 51142)).